Here is a 1041-residue protein sequence, read N- to C-terminus: Cullin-associated NEDD8-dissociated protein 1, C-terminal part (1041 aa).

2 disordered regions span residues 1–24 and 64–103; these read MSSD…ELRE and DMGE…EGGY. Basic and acidic residues predominate over residues 9–24; sequence YSHDDEHDPQTDELRE. Over residues 65–103 the composition is skewed to acidic residues; sequence MGEDEEMSGTQDDGSEDDVTEEPDLEDDDFEDFEEEGGY. The stretch at 138-176 is one HEAT 1 repeat; sequence SLYQQIAPAIVARFNKEREESVKLELVSTMDALVRKTAE. The segment at 189 to 237 is disordered; it reads SVGSGSKISRKRRRQDSDASMIDFEPSMGTSSAAGTPLAAPSSPQSGPQ. Positions 225 to 237 are enriched in low complexity; that stretch reads PLAAPSSPQSGPQ. 10 HEAT repeats span residues 242-279, 339-376, 434-472, 479-516, 525-560, 598-637, 670-708, 710-744, 780-817, and 822-867; these read NALP…VRYG, PFLI…ALTP, LSFE…LCSR, NWVR…NPNT, MKNL…GNAQ, GSGL…NVGV, GASC…GNVK, YLPT…MVRR, LDPP…DSRD, and VLRP…HLGE.

It belongs to the CAND family. Interacts with candA-N. Interacts with unneddylated cullins culA and culD.

It is found in the nucleus. In terms of biological role, assembly factor of SCF (SKP1-CUL1-F-box protein) E3 ubiquitin ligase complexes that promotes the exchange of the substrate-recognition F-box subunit in SCF complexes, thereby playing a key role in the cellular repertoire of SCF complexes. Acts as a F-box protein exchange factor when interacting with candA-N. This Emericella nidulans (strain FGSC A4 / ATCC 38163 / CBS 112.46 / NRRL 194 / M139) (Aspergillus nidulans) protein is Cullin-associated NEDD8-dissociated protein 1, C-terminal part (candA-C).